Here is a 655-residue protein sequence, read N- to C-terminus: Forkhead box protein O1 (655 aa).

Disordered stretches follow at residues 1-63 and 116-158; these read MAEA…SASA and GCLH…SRRN. Thr24 bears the Phosphothreonine; by PKB/AKT1 or PKB/AKT2 and SGK1 mark. The span at 33–63 shows a compositional bias: low complexity; sequence SQSNSATSSPAPSGSAAANPDAAAGLPSASA. Over residues 120 to 141 the composition is skewed to pro residues; that stretch reads PAPPQPPPPGPLSQHPPVPPAA. Residues 159 to 235 constitute a DNA-binding region (fork-head); it reads AWGNLSYADL…VQNEGTGKSS (77 aa). 2 DNA-binding regions span residues 211–218 and 234–237; these read NSIRHNLS and SSWW. Phosphoserine; by STK4/MST1 occurs at positions 212, 218, 234, and 235. Residues 234–344 form a disordered region; it reads SSWWMLNPEG…QDDLGEGDVH (111 aa). Lys245 and Lys248 each carry N6-acetyllysine. Position 249 is a phosphoserine; by CDK1 (Ser249). An omega-N-methylarginine; by PRMT1 mark is found at Arg251 and Arg253. Residues 251-253 carry the Nuclear localization signal motif; sequence RRR. Ser256 carries the phosphoserine; by PKB/AKT1 and SGK1 modification. N6-acetyllysine is present on residues Lys262, Lys265, and Lys274. The span at 264 to 275 shows a compositional bias: basic residues; sequence AKSRSRAAKKKA. Residues 283–563 form a sufficient for interaction with NLK region; it reads GAGDSPGSQF…RLTQVKTPVQ (281 aa). 2 positions are modified to phosphoserine: Ser287 and Ser298. Residues 309 to 326 show a composition bias toward polar residues; that stretch reads NWSTFRPRTSSNASTISG. Ser319 carries the post-translational modification Phosphoserine; by PKB/AKT1. Phosphoserine; by CK1 and SGK1 is present on Ser322. Residue Ser325 is modified to Phosphoserine; by CK1. At Ser329 the chain carries Phosphoserine; by DYRK1A. Thr333 carries the phosphothreonine modification. Positions 363–459 are required for interaction with RUNX2; it reads SEISNPENME…GGMSQYNCAP (97 aa). Lys423 carries the post-translational modification N6-acetyllysine. The short motif at 462–466 is the Required for interaction with SIRT1 element; that stretch reads LKELL. Positions 507-534 are enriched in polar residues; that stretch reads YGSQASHNKMMNPSSHTHPGHAQQTSAV. The tract at residues 507–537 is disordered; that stretch reads YGSQASHNKMMNPSSHTHPGHAQQTSAVNGR.

Interacts with LRPPRC. Interacts with RUNX2; the interaction inhibits RUNX2 transcriptional activity and mediates the IGF1/insulin-dependent BGLAP expression in osteoblasts Interacts with PPP2R1A; the interaction regulates the dephosphorylation of FOXO1 at Thr-24 and Ser-256 leading to its nuclear import. Interacts (acetylated form) with PPARG. Interacts with XBP1 isoform 2; this interaction is direct and leads to FOXO1 ubiquitination and degradation via the proteasome pathway. Interacts with NLK. Interacts with SIRT1; the interaction results in the deacetylation of FOXO1 leading to activation of FOXO1-mediated transcription of genes involved in DNA repair and stress resistance. Binds to CDK1. Interacts with the 14-3-3 proteins, YWHAG and YWHAZ; the interactions require insulin-stimulated phosphorylation on Thr-24, promote nuclear exit and loss of transcriptional activity. Interacts with SKP2; the interaction ubiquitinates FOXO1 leading to its proteasomal degradation. The interaction requires the presence of KRIT1. Interacts (via the C-terminal half) with ATF4 (via its DNA-binding domain); the interaction occurs in osteoblasts, regulates glucose homeostasis via suppression of beta-cell proliferation and subsequent decrease in insulin production. Interacts with PRMT1; the interaction methylates FOXO1, prevents PKB/AKT1 phosphorylation and retains FOXO1 in the nucleus. Interacts with EP300 and CREBBP; the interactions acetylate FOXO1. Interacts with SIRT2; the interaction is disrupted in response to oxidative stress or serum deprivation, leading to increased level of acetylated FOXO1, which promotes stress-induced autophagy by stimulating E1-like activating enzyme ATG7. Interacts (acetylated form) with ATG7; the interaction is increased in response to oxidative stress or serum deprivation and promotes the autophagic process leading to cell death. Interacts (via the Fork-head domain) with CEBPA; the interaction increases when FOXO1 is deacetylated. Interacts with WDFY2. Forms a complex with WDFY2 and AKT1. Interacts with CRY1. Interacts with PPIA/CYPA; the interaction promotes FOXO1 dephosphorylation, nuclear accumulation and transcriptional activity. Interacts with TOX4; FOXO1 is required for full induction of TOX4-dependent activity and the interaction is inhibited by insulin. Interacts (when phosphorylated on Ser-256) with STUB1/CHIP. In terms of processing, phosphorylation by NLK promotes nuclear export and inhibits the transcriptional activity. In response to growth factors, phosphorylation on Thr-24, Ser-256 and Ser-322 by PKB/AKT1 promotes nuclear export and inactivation of transactivational activity. Phosphorylation on Thr-24 is required for binding 14-3-3 proteins. Phosphorylation of Ser-256 decreases DNA-binding activity and promotes the phosphorylation of Thr-24 and Ser-319, permitting phosphorylation of Ser-322 and Ser-325, probably by CDK1, leading to nuclear exclusion and loss of function. Stress signals, such as response to oxygen or nitric oxide, attenuate the PKB/AKT1-mediated phosphorylation leading to nuclear retention. Phosphorylation of Ser-329 is independent of IGF1 and leads to reduced function. Dephosphorylated on Thr-24 and Ser-256 by PP2A in beta-cells under oxidative stress leading to nuclear retention. Phosphorylation of Ser-249 by CDK1 disrupts binding of 14-3-3 proteins leading to nuclear accumulation and has no effect on DNA-binding nor transcriptional activity. Phosphorylation by STK4/MST1 on Ser-212, upon oxidative stress, inhibits binding to 14-3-3 proteins and nuclear export. PPIA/CYPA promotes its dephosphorylation on Ser-256. Post-translationally, ubiquitinated by SKP2. Ubiquitination leads to proteasomal degradation. Ubiquitinated by STUB1/CHIP; when Ser-256 is phosphorylated. Methylation inhibits AKT1-mediated phosphorylation at Ser-256 and is increased by oxidative stress. In terms of processing, acetylated. Acetylation at Lys-262, Lys-265 and Lys-274 are necessary for autophagic cell death induction. Deacetylated by SIRT2 in response to oxidative stress or serum deprivation, thereby negatively regulating FOXO1-mediated autophagic cell death. Once in the nucleus, acetylated by CREBBP/EP300. Acetylation diminishes the interaction with target DNA and attenuates the transcriptional activity. It increases the phosphorylation at Ser-256. Deacetylation by SIRT1 results in reactivation of the transcriptional activity. Oxidative stress by hydrogen peroxide treatment appears to promote deacetylation and uncoupling of insulin-induced phosphorylation. By contrast, resveratrol acts independently of acetylation. Acetylated at Lys-423, promoting its localization to the nucleus and transcription factor activity. Deacetylation at Lys-423 by SIRT6, promotes its translocation into the cytoplasm, preventing its transcription factor activity. Deacetylation and subsequent inhibition by SIRT6 has different effects depending on cell types: it inhibits gluconeogenesis in hepatocytes, promotes glucose sensing in pancreatic beta-cells and regulates lipid catabolism in brown adipocytes. Expressed in umbilical endothelial cells (at protein level). Abundantly expressed in skeletal muscle and ovary, with lower expression in the heart, placenta, lung, liver, pancreas, spleen, testis and small intestine. Weakly expressed in the brain, thymus, prostate and mucosal lining of the colon.

The protein resides in the cytoplasm. Its subcellular location is the nucleus. In terms of biological role, transcription factor that is the main target of insulin signaling and regulates metabolic homeostasis in response to oxidative stress. Binds to the insulin response element (IRE) with consensus sequence 5'-TT[G/A]TTTTG-3' and the related Daf-16 family binding element (DBE) with consensus sequence 5'-TT[G/A]TTTAC-3'. Activity suppressed by insulin. Main regulator of redox balance and osteoblast numbers and controls bone mass. Orchestrates the endocrine function of the skeleton in regulating glucose metabolism. Also acts as a key regulator of chondrogenic commitment of skeletal progenitor cells in response to lipid availability: when lipids levels are low, translocates to the nucleus and promotes expression of SOX9, which induces chondrogenic commitment and suppresses fatty acid oxidation. Acts synergistically with ATF4 to suppress osteocalcin/BGLAP activity, increasing glucose levels and triggering glucose intolerance and insulin insensitivity. Also suppresses the transcriptional activity of RUNX2, an upstream activator of osteocalcin/BGLAP. Acts as an inhibitor of glucose sensing in pancreatic beta cells by acting as a transcription repressor and suppressing expression of PDX1. In hepatocytes, promotes gluconeogenesis by acting together with PPARGC1A and CEBPA to activate the expression of genes such as IGFBP1, G6PC1 and PCK1. Also promotes gluconeogenesis by directly promoting expression of PPARGC1A and G6PC1. Important regulator of cell death acting downstream of CDK1, PKB/AKT1 and STK4/MST1. Promotes neural cell death. Mediates insulin action on adipose tissue. Regulates the expression of adipogenic genes such as PPARG during preadipocyte differentiation and, adipocyte size and adipose tissue-specific gene expression in response to excessive calorie intake. Regulates the transcriptional activity of GADD45A and repair of nitric oxide-damaged DNA in beta-cells. Required for the autophagic cell death induction in response to starvation or oxidative stress in a transcription-independent manner. Mediates the function of MLIP in cardiomyocytes hypertrophy and cardiac remodeling. Positive regulator of apoptosis in cardiac smooth muscle cells as a result of its transcriptional activation of pro-apoptotic genes. Regulates endothelial cell (EC) viability and apoptosis in a PPIA/CYPA-dependent manner via transcription of CCL2 and BCL2L11 which are involved in EC chemotaxis and apoptosis. The protein is Forkhead box protein O1 of Homo sapiens (Human).